Reading from the N-terminus, the 194-residue chain is RNA polymerase II subunit A C-terminal domain phosphatase SSU72 like protein 2 (194 aa).

Belongs to the SSU72 phosphatase family.

It localises to the nucleus. It carries out the reaction O-phospho-L-seryl-[protein] + H2O = L-seryl-[protein] + phosphate. The catalysed reaction is O-phospho-L-threonyl-[protein] + H2O = L-threonyl-[protein] + phosphate. Its function is as follows. Protein phosphatase that catalyzes the dephosphorylation of the C-terminal domain of RNA polymerase II. Plays a role in RNA processing and termination. The polypeptide is RNA polymerase II subunit A C-terminal domain phosphatase SSU72 like protein 2 (Homo sapiens (Human)).